Reading from the N-terminus, the 129-residue chain is M-zodatoxin-Lt8k (129 aa).

A signal peptide spans 1–20 (MKYFVVALALVAAFACIAES). Positions 21–60 (KPAESEHELAEVEEENELADLEDAVWLEHLADLSDLEEAR) are excised as a propeptide.

This sequence belongs to the cationic peptide 06 (cytoinsectotoxin) family. In terms of tissue distribution, expressed by the venom gland.

It localises to the secreted. Functionally, insecticidal, cytolytic and antimicrobial peptide. Forms voltage-dependent, ion-permeable channels in membranes. At high concentration causes cell membrane lysis. The polypeptide is M-zodatoxin-Lt8k (cit 1-10) (Lachesana tarabaevi (Spider)).